A 416-amino-acid polypeptide reads, in one-letter code: Casein kinase I isoform epsilon (416 aa).

The region spanning 9–277 (YRLGRKIGSG…YLRQLFRNLF (269 aa)) is the Protein kinase domain. Residues 15-23 (IGSGSFGDI) and K38 contribute to the ATP site. Residue D128 is the Proton acceptor of the active site. A compositionally biased stretch (basic and acidic residues) spans 301 to 318 (PEDVDRERREHEREERMG). The interval 301-416 (PEDVDRERRE…TSVPFDHLGK (116 aa)) is disordered. Residues S343 and S354 each carry the phosphoserine modification. The span at 351 to 365 (TPASRIQQTGNTSPR) shows a compositional bias: polar residues. Position 362 is a phosphothreonine (T362). Residue S363 is modified to Phosphoserine. R382 is subject to Omega-N-methylarginine. A phosphoserine mark is found at S389, S405, and S408.

This sequence belongs to the protein kinase superfamily. CK1 Ser/Thr protein kinase family. Casein kinase I subfamily. Monomer. Component of the circadian core oscillator, which includes the CRY proteins, CLOCK, or NPAS2, ARTNL/BMAL1 or ARTNL2/BMAL2, CSNK1D and/or CSNK1E, TIMELESS and the PER proteins. Interacts with ANKRD6. Interacts with PER1. Interacts with DBNDD2, LRP5, LRP6 and SOCS3. Interacts with SNAI1 (via zinc fingers). Interacts with DDX3X; this interaction greatly enhances CSNK1E affinity for ATP and DVL2 phosphorylation, but inhibits DDX3X ATPase/helicase activity. In the presence of RNA, the interaction is decreased. Interacts with FAM83A, FAM83B, FAM83E and FAM83H (via DUF1669). In terms of processing, autophosphorylated. Partially dephosphorylated by PPP5C. May be dephosphorylated by PP1. Expressed in all tissues examined, including brain, heart, lung, liver, pancreas, kidney, placenta and skeletal muscle. Expressed in monocytes and lymphocytes but not in granulocytes.

Its subcellular location is the cytoplasm. The protein resides in the nucleus. It catalyses the reaction L-seryl-[protein] + ATP = O-phospho-L-seryl-[protein] + ADP + H(+). The enzyme catalyses L-threonyl-[protein] + ATP = O-phospho-L-threonyl-[protein] + ADP + H(+). Phosphorylation leads to a decrease in the catalytic activity. Casein kinases are operationally defined by their preferential utilization of acidic proteins such as caseins as substrates. Participates in Wnt signaling. Phosphorylates DVL1. Phosphorylates DVL2. Phosphorylates NEDD9/HEF1. Central component of the circadian clock. In balance with PP1, determines the circadian period length, through the regulation of the speed and rhythmicity of PER1 and PER2 phosphorylation. Controls PER1 and PER2 nuclear transport and degradation. Inhibits cytokine-induced granuloytic differentiation. The polypeptide is Casein kinase I isoform epsilon (Csnk1e) (Mus musculus (Mouse)).